Consider the following 759-residue polypeptide: Catalase-peroxidase (759 aa).

Positions Met1–Asn24 are disordered. Residues Trp96–Tyr242 constitute a cross-link (tryptophyl-tyrosyl-methioninium (Trp-Tyr) (with M-268)). His97 serves as the catalytic Proton acceptor. The segment at residues Tyr242–Met268 is a cross-link (tryptophyl-tyrosyl-methioninium (Tyr-Met) (with W-96)). Residue His283 participates in heme b binding.

Belongs to the peroxidase family. Peroxidase/catalase subfamily. As to quaternary structure, homodimer or homotetramer. The cofactor is heme b. In terms of processing, formation of the three residue Trp-Tyr-Met cross-link is important for the catalase, but not the peroxidase activity of the enzyme.

The protein resides in the cytoplasm. It catalyses the reaction H2O2 + AH2 = A + 2 H2O. The enzyme catalyses 2 H2O2 = O2 + 2 H2O. In terms of biological role, bifunctional enzyme with both catalase and broad-spectrum peroxidase activity. This chain is Catalase-peroxidase, found in Aspergillus fumigatus (strain CBS 144.89 / FGSC A1163 / CEA10) (Neosartorya fumigata).